We begin with the raw amino-acid sequence, 158 residues long: MTKFTILLISLLFCIAHTCSASKWQHQQDSCRKQLQGVNLTPCEKHIMEKIQGRGDDDDDDDDDNHILRTMRGRINYIRRNEGKDEDEEEEGHMQKCCTEMSELRSPKCQCKALQKIMENQSEELEEKQKKKMEKELINLATMCRFGPMIQCDLSSDD.

An N-terminal signal peptide occupies residues 1–21 (MTKFTILLISLLFCIAHTCSA). Residues 54–56 (RGD) carry the Cell attachment site motif. Residues 65–81 (NHILRTMRGRINYIRRN) constitute a propeptide that is removed on maturation.

Belongs to the 2S seed storage albumins family. As to quaternary structure, the protein consists of two chains linked by 2 disulfide bonds. As to expression, expressed in cotyledons. Maximal expression in parenchyma cells undergoing DNA endoreduplication and cell expansion but not in actively dividing cells of the cotyledon.

Functionally, this is a 2S seed storage protein. Binds to mammalian chromatin, preventing the normal formation of the kinetochore complex in the centromere and leading to the disruption of mitosis. This Glycine max (Soybean) protein is 2S seed storage albumin protein.